Here is a 238-residue protein sequence, read N- to C-terminus: Thiamine import ATP-binding protein ThiQ (238 aa).

The ABC transporter domain maps to 1–234 (MSSTALAVKG…RDIAAINRFL (234 aa)). ATP is bound at residue 36–43 (GASGSGKS).

It belongs to the ABC transporter superfamily. Thiamine importer (TC 3.A.1.19.1) family. The complex is composed of two ATP-binding proteins (ThiQ), two transmembrane proteins (ThiP) and a solute-binding protein (ThiB).

The protein resides in the cell inner membrane. It catalyses the reaction thiamine(out) + ATP + H2O = thiamine(in) + ADP + phosphate + H(+). In terms of biological role, part of the ABC transporter complex ThiBPQ involved in thiamine import. Responsible for energy coupling to the transport system. This is Thiamine import ATP-binding protein ThiQ from Rhizobium meliloti (strain 1021) (Ensifer meliloti).